Consider the following 616-residue polypeptide: Chaperone protein HscA homolog (616 aa).

The protein belongs to the heat shock protein 70 family.

Chaperone involved in the maturation of iron-sulfur cluster-containing proteins. Has a low intrinsic ATPase activity which is markedly stimulated by HscB. This Aliivibrio fischeri (strain MJ11) (Vibrio fischeri) protein is Chaperone protein HscA homolog.